We begin with the raw amino-acid sequence, 343 residues long: Transmembrane protein 120A (343 aa).

Topologically, residues 1-132 are cytoplasmic; the sequence is MQPPPPGPLG…KQAKFAYKDE (132 aa). Lys130 is a CoA binding site. Residues 133-152 traverse the membrane as a helical segment; sequence YEKFKLYLTIILILISFTCR. Topologically, residues 153 to 158 are extracellular; the sequence is FLLNSR. Residues 159-177 traverse the membrane as a helical segment; that stretch reads VTDAAFNFLLVWYYCTLTI. Residues 178–190 lie on the Cytoplasmic side of the membrane; that stretch reads RESILINNGSRIK. The CoA site is built by Ser187 and Arg188. Residues 191 to 209 form a helical membrane-spanning segment; sequence GWWVFHHYVSTFLSGVMLT. Topologically, residues 210-218 are extracellular; the sequence is WPDGLMYQK. The chain crosses the membrane as a helical span at residues 219–240; sequence FRNQFLSFSMYQSFVQFLQYYY. Positions 237, 240, 241, and 283 each coordinate CoA. Topologically, residues 241–270 are cytoplasmic; sequence QSGCLYRLRALGERHTMDLTVEGFQSWMWR. A helical transmembrane segment spans residues 271 to 294; it reads GLTFLLPFLFFGHFWQLFNALTLF. At 295–304 the chain is on the extracellular side; sequence NLAQDPQCKE. The helical transmembrane segment at 305 to 330 threads the bilayer; it reads WQVLMCGFPFLLLFLGNFFTTLRVVH. The Cytoplasmic segment spans residues 331 to 343; that stretch reads HKFHSQRHGSKKD. A CoA-binding site is contributed by Lys332.

Belongs to the TMEM120 family. Homodimer. Forms heterooligomer with TMEM120B. Interacts with PKD2; TMEM120A inhibits PKD2 channel activity through the physical association of PKD2 with TMEM120A. Interacts (via C-terminal domain) with STING1; regulates the trafficking of STING1 from the ER to the ER-Golgi intermediate compartment to elicit antiviral effects. In terms of tissue distribution, expressed in nociceptors.

It localises to the cell membrane. The protein resides in the nucleus inner membrane. The protein localises to the endoplasmic reticulum. In terms of biological role, multifunctional protein involved in mechanosensation, and plays an essential role in lipid metabolism and adipocyte differentiation. May function as a potential ion channel involved in sensing mechanical stimuli. Mediates the mechanosensitivity of the PKD2-TMEM120A channel complex through direct physical interaction. TMEM120A seems to affect mechanosensation by inhibiting PIEZO2 channels, possibly by altering cellular lipid content. TMEM120A is structurally similar to a lipid-modifying enzyme, ELOVL7, and contains a bound coenzyme A molecule, which suggests it might function as an enzyme in lipid metabolism. Additionnaly, implicated in innate immune response against Zika virus. Acts as a key activator of the antiviral signaling involving STING1. This chain is Transmembrane protein 120A, found in Homo sapiens (Human).